We begin with the raw amino-acid sequence, 245 residues long: Ribosomal RNA large subunit methyltransferase E (245 aa).

Residues 1 to 25 are disordered; the sequence is MTKSPIGGNRSGRKLGQKVKKGKLK. Over residues 11–25 the composition is skewed to basic residues; it reads SGRKLGQKVKKGKLK. S-adenosyl-L-methionine is bound by residues G81, W83, D104, D120, and D144. K184 serves as the catalytic Proton acceptor.

It belongs to the class I-like SAM-binding methyltransferase superfamily. RNA methyltransferase RlmE family.

The protein resides in the cytoplasm. It carries out the reaction uridine(2552) in 23S rRNA + S-adenosyl-L-methionine = 2'-O-methyluridine(2552) in 23S rRNA + S-adenosyl-L-homocysteine + H(+). In terms of biological role, specifically methylates the uridine in position 2552 of 23S rRNA at the 2'-O position of the ribose in the fully assembled 50S ribosomal subunit. The protein is Ribosomal RNA large subunit methyltransferase E of Rhizobium meliloti (strain 1021) (Ensifer meliloti).